The sequence spans 346 residues: tRNA N6-adenosine threonylcarbamoyltransferase (346 aa).

Positions 117, 121, and 138 each coordinate a divalent metal cation. Residues 138-142 (YVSGG), Asp-170, Gly-185, and Asn-277 contribute to the substrate site. Residue Asp-305 coordinates a divalent metal cation.

It belongs to the KAE1 / TsaD family. As to quaternary structure, component of the EKC/KEOPS complex composed of at least SPAP27G11.07c/BUD32, cgi121, gon7, pgp2 and SPAC4H3.13/PCC1; the whole complex dimerizes. Requires a divalent metal cation as cofactor.

The protein localises to the cytoplasm. Its subcellular location is the nucleus. The catalysed reaction is L-threonylcarbamoyladenylate + adenosine(37) in tRNA = N(6)-L-threonylcarbamoyladenosine(37) in tRNA + AMP + H(+). Component of the EKC/KEOPS complex that is required for the formation of a threonylcarbamoyl group on adenosine at position 37 (t(6)A37) in tRNAs that read codons beginning with adenine. The complex is probably involved in the transfer of the threonylcarbamoyl moiety of threonylcarbamoyl-AMP (TC-AMP) to the N6 group of A37. Pgp2 likely plays a direct catalytic role in this reaction, but requires other protein(s) of the complex to fulfill this activity. The EKC/KEOPS complex also promotes both telomere uncapping and telomere elongation. The complex is required for efficient recruitment of transcriptional coactivators. The sequence is that of tRNA N6-adenosine threonylcarbamoyltransferase (pgp2) from Schizosaccharomyces pombe (strain 972 / ATCC 24843) (Fission yeast).